The following is a 363-amino-acid chain: 3-isopropylmalate dehydrogenase (363 aa).

77-90 (GPKWQHLPPDQQPE) is an NAD(+) binding site. Substrate-binding residues include R98, R108, R137, and D226. 3 residues coordinate Mg(2+): D226, D250, and D254. 284–296 (GSAPDIAGKNIAN) lines the NAD(+) pocket.

The protein belongs to the isocitrate and isopropylmalate dehydrogenases family. LeuB type 1 subfamily. As to quaternary structure, homodimer. Mg(2+) is required as a cofactor. Mn(2+) serves as cofactor.

Its subcellular location is the cytoplasm. The enzyme catalyses (2R,3S)-3-isopropylmalate + NAD(+) = 4-methyl-2-oxopentanoate + CO2 + NADH. Its pathway is amino-acid biosynthesis; L-leucine biosynthesis; L-leucine from 3-methyl-2-oxobutanoate: step 3/4. Its function is as follows. Catalyzes the oxidation of 3-carboxy-2-hydroxy-4-methylpentanoate (3-isopropylmalate) to 3-carboxy-4-methyl-2-oxopentanoate. The product decarboxylates to 4-methyl-2 oxopentanoate. The chain is 3-isopropylmalate dehydrogenase from Buchnera aphidicola subsp. Pemphigus spyrothecae.